The chain runs to 1254 residues: MTKLMVRSECMLRMVRRRPLRVQFCARWFSTKKNTAEAPRINPVGIQYLGESLQRQVFGSCGGKDEVEQSDKLMELSKKSLKDHGLWGKKTLITDPISFPLPPLQGRSLDEHFQKIGRFNSEPYKSFCEDKFTEMVARPAEWLRKPGWVKYVPGMAPVEVAYPDEELVVFDVETLYNVSDYPTLATALSSTAWYLWCSPFICGGDDPAALIPLNTLNKEQVIIGHNVAYDRARVLEEYNFRDSKAFFLDTQSLHIASFGLCSRQRPMFMKNNKKKEAEVESEVHPEISIEDYDDPWLNVSALNSLKDVAKFHCKIDLDKTDRDFFASTDKSTIIENFQKLVNYCATDVTATSQVFDEIFPVFLKKCPHPVSFAGLKSLSKCILPTKLNDWNDYLNSSESLYQQSKVQIESKIVQIIKDIVLLKDKPDFYLKDPWLSQLDWTTKPLRLTKKGVPAKCQKLPGFPEWYRQLFPSKDTVEPKITIKSRIIPILFKLSWENSPVIWSKESGWCFNVPHEQVETYKAKNYVLADSVSQEEEEIRTHNLGLQCTGVLFKVPHPNGPTFNCTNLLTKSYNHFFEKGVLKSESELAHQALQINSSGSYWMSARERIQSQFVVPSCKFPNEFQSLSAKSSLNNEKTNDLAIIIPKIVPMGTITRRAVENAWLTASNAKANRIGSELKTQVKAPPGYCFVGADVDSEELWIASLVGDSIFNVHGGTAIGWMCLEGTKNEGTDLHTKTAQILGCSRNEAKIFNYGRIYGAGAKFASQLLKRFNPSLTDEETKKIANKLYENTKGKTKRSKLFKKFWYGGSESILFNKLESIAEQETPKTPVLGCGITYSLMKKNLRANSFLPSRINWAIQSSGVDYLHLLCCSMEYIIKKYNLEARLCISIHDEIRFLVSEKDKYRAAMALQISNIWTRAMFCQQMGINELPQNCAFFSQVDIDSVIRKEVNMDCITPSNKTAIPHGEALDINQLLDKSNSKLGKPNLDIDSKVSQYAYNYREPVFEEYNKSYTPEFLKYFLAMQVQSDKRDVNRLEDEYLRECTSKEYARDGNTAEYSLLDYIKDVEKGKRTKVRIMGSNFLDGTKNAKADQRIRLPVNMPDYPTLHKIANDSAIPEKQLLENRRKKENRIDDENKKKLTRKKNTTPMERKYKRVYGGRKAFEAFYECANKPLDYTLETEKQFFNIPIDGVIDDVLNDKSNYKKKPSQARTASSSPIRKTAKAVHSKKLPARKSSTTNRNLVELERDITISREY.

Positions 1125–1137 are enriched in basic and acidic residues; sequence RKKENRIDDENKK. 2 disordered regions span residues 1125 to 1145 and 1202 to 1240; these read RKKE…KKNT and YKKK…TNRN. A compositionally biased stretch (polar residues) spans 1208 to 1217; it reads QARTASSSPI. Positions 1219 to 1231 are enriched in basic residues; the sequence is KTAKAVHSKKLPA.

Belongs to the DNA polymerase type-A family. Mg(2+) serves as cofactor.

The protein resides in the mitochondrion. It carries out the reaction DNA(n) + a 2'-deoxyribonucleoside 5'-triphosphate = DNA(n+1) + diphosphate. Functionally, involved in the replication of mitochondrial DNA. The polypeptide is DNA polymerase gamma (MIP1) (Saccharomyces cerevisiae (strain ATCC 204508 / S288c) (Baker's yeast)).